A 114-amino-acid polypeptide reads, in one-letter code: Ig kappa chain V-I region S107A (114 aa).

Positions 1–23 are framework-1; it reads DIVMTQSPTFLAVTASKKVTISC. Residues cysteine 23 and cysteine 94 are joined by a disulfide bond. The complementarity-determining-1 stretch occupies residues 24 to 40; sequence TASESLYSSKHKVHYLA. A framework-2 region spans residues 41-55; sequence WYQKKPEQSPKLLIY. The interval 56–62 is complementarity-determining-2; it reads GASNRYI. Residues 63 to 94 form a framework-3 region; that stretch reads GVPDRFTGSGSGTDFTLTISSVQVEDLTHYYC. Residues 95–103 form a complementarity-determining-3 region; sequence AQFYSYPLT. Residues 104 to 113 are framework-4; the sequence is FGAGTKLELK.

Functionally, anti-phosphocholine antibody. This chain is Ig kappa chain V-I region S107A (Igkv7-33), found in Mus musculus (Mouse).